We begin with the raw amino-acid sequence, 357 residues long: Anthranilate phosphoribosyltransferase (357 aa).

5-phospho-alpha-D-ribose 1-diphosphate-binding positions include Gly-91, 94-95 (GD), Thr-99, 101-104 (NIST), 119-127 (KHGNRSVSS), and Ser-131. Gly-91 lines the anthranilate pocket. Ser-103 lines the Mg(2+) pocket. Asn-122 is a binding site for anthranilate. Residue Arg-177 coordinates anthranilate. Mg(2+) contacts are provided by Asp-235 and Glu-236.

The protein belongs to the anthranilate phosphoribosyltransferase family. In terms of assembly, homodimer. Mg(2+) serves as cofactor.

The enzyme catalyses N-(5-phospho-beta-D-ribosyl)anthranilate + diphosphate = 5-phospho-alpha-D-ribose 1-diphosphate + anthranilate. The protein operates within amino-acid biosynthesis; L-tryptophan biosynthesis; L-tryptophan from chorismate: step 2/5. Functionally, catalyzes the transfer of the phosphoribosyl group of 5-phosphorylribose-1-pyrophosphate (PRPP) to anthranilate to yield N-(5'-phosphoribosyl)-anthranilate (PRA). The sequence is that of Anthranilate phosphoribosyltransferase from Shewanella baltica (strain OS185).